The primary structure comprises 328 residues: L-lactate dehydrogenase (328 aa).

Residues Val-18, Glu-39, Lys-46, Tyr-71, and 85–86 contribute to the NAD(+) site; that span reads GA. 2 residues coordinate substrate: Gln-88 and Arg-94. Residues Ser-107, 124 to 126, and Ser-149 each bind NAD(+); that span reads AAN. A substrate-binding site is contributed by 126 to 129; it reads NPVD. A substrate-binding site is contributed by 154–157; sequence DSAR. Positions 159 and 174 each coordinate beta-D-fructose 1,6-bisphosphate. His-181 acts as the Proton acceptor in catalysis. Tyr-226 is subject to Phosphotyrosine. Thr-235 contributes to the substrate binding site.

This sequence belongs to the LDH/MDH superfamily. LDH family. As to quaternary structure, homotetramer.

The protein localises to the cytoplasm. It carries out the reaction (S)-lactate + NAD(+) = pyruvate + NADH + H(+). The protein operates within fermentation; pyruvate fermentation to lactate; (S)-lactate from pyruvate: step 1/1. Its activity is regulated as follows. Allosterically activated by fructose 1,6-bisphosphate (FBP). Its function is as follows. Catalyzes the conversion of lactate to pyruvate. In Streptococcus sanguinis (strain SK36), this protein is L-lactate dehydrogenase.